The primary structure comprises 378 residues: Deoxyguanosinetriphosphate triphosphohydrolase-like protein (378 aa).

One can recognise an HD domain in the interval 62–198; it reads RLTHTIEVAQ…AAVADDVAYN (137 aa).

Belongs to the dGTPase family. Type 2 subfamily.

In Paracoccus denitrificans (strain Pd 1222), this protein is Deoxyguanosinetriphosphate triphosphohydrolase-like protein.